A 192-amino-acid polypeptide reads, in one-letter code: Peptidyl-tRNA hydrolase (192 aa).

A tRNA-binding site is contributed by tyrosine 16. Catalysis depends on histidine 21, which acts as the Proton acceptor. Residues tyrosine 66 and asparagine 68 each contribute to the tRNA site.

Belongs to the PTH family. As to quaternary structure, monomer.

It localises to the cytoplasm. It catalyses the reaction an N-acyl-L-alpha-aminoacyl-tRNA + H2O = an N-acyl-L-amino acid + a tRNA + H(+). Functionally, hydrolyzes ribosome-free peptidyl-tRNAs (with 1 or more amino acids incorporated), which drop off the ribosome during protein synthesis, or as a result of ribosome stalling. Its function is as follows. Catalyzes the release of premature peptidyl moieties from peptidyl-tRNA molecules trapped in stalled 50S ribosomal subunits, and thus maintains levels of free tRNAs and 50S ribosomes. This chain is Peptidyl-tRNA hydrolase, found in Aquifex aeolicus (strain VF5).